Consider the following 106-residue polypeptide: Serine rich endogenous peptide 7 (106 aa).

The signal sequence occupies residues 1–26 (MGKKCSSKFRQMLVLVLLLIVFTCLS). Basic and acidic residues-rich tracts occupy residues 46–56 (GIEDEGQERTH) and 65–77 (RSVE…EGRR). The segment at 46 to 106 (GIEDEGQERT…GGGRIPVAAS (61 aa)) is disordered. Short sequence motifs (SCOOP motif) lie at residues 58–72 (LNSK…KTHH) and 86–100 (GIRA…GGGR). 2 short sequence motifs (sxS motif essential for MIK2 binding) span residues 64–66 (SRS) and 92–94 (SKS).

The protein belongs to the serine rich endogenous peptide (SCOOP) phytocytokine family. In terms of assembly, interacts with MIK2 (via extracellular leucine-rich repeat domain); this interaction triggers the formation of complex between MIK2 and the BAK1/SERK3 and SERK4 coreceptors, and subsequent BAK1 activation by phosphorylation. In terms of tissue distribution, mostly expressed in roots, and, to a lower extent, in seedlings shoots.

The protein localises to the cell membrane. Its subcellular location is the secreted. It localises to the extracellular space. It is found in the apoplast. Functionally, brassicaceae-specific phytocytokine (plant endogenous peptide released into the apoplast) perceived by MIK2 in a BAK1/SERK3 and SERK4 coreceptors-dependent manner, that modulates various physiological and antimicrobial processes including growth prevention and reactive oxygen species (ROS) response regulation. In Arabidopsis thaliana (Mouse-ear cress), this protein is Serine rich endogenous peptide 7.